The primary structure comprises 347 residues: Ribosomal RNA large subunit methyltransferase M (347 aa).

S-adenosyl-L-methionine-binding positions include Ser184, Ala217–Gly220, Asp236, Asp256, and Asp272. The active-site Proton acceptor is the Lys301.

The protein belongs to the class I-like SAM-binding methyltransferase superfamily. RNA methyltransferase RlmE family. RlmM subfamily. As to quaternary structure, monomer.

It localises to the cytoplasm. It catalyses the reaction cytidine(2498) in 23S rRNA + S-adenosyl-L-methionine = 2'-O-methylcytidine(2498) in 23S rRNA + S-adenosyl-L-homocysteine + H(+). Functionally, catalyzes the 2'-O-methylation at nucleotide C2498 in 23S rRNA. This Xanthomonas axonopodis pv. citri (strain 306) protein is Ribosomal RNA large subunit methyltransferase M.